The following is a 73-amino-acid chain: MSMSHIYTVVRCPRCGKPVPWNETQRFRPFCSERCRLIDLGSWANEDYAIPGEPIDPAEPSEDRNGAEGPPTD.

Residues cysteine 12, cysteine 15, cysteine 31, and cysteine 35 each coordinate Zn(2+). Positions 47-73 are disordered; sequence DYAIPGEPIDPAEPSEDRNGAEGPPTD.

This sequence belongs to the DNA gyrase inhibitor YacG family. Interacts with GyrB. It depends on Zn(2+) as a cofactor.

Inhibits all the catalytic activities of DNA gyrase by preventing its interaction with DNA. Acts by binding directly to the C-terminal domain of GyrB, which probably disrupts DNA binding by the gyrase. This Methylococcus capsulatus (strain ATCC 33009 / NCIMB 11132 / Bath) protein is DNA gyrase inhibitor YacG.